The chain runs to 37 residues: uncharacterized protein (37 aa).

A helical membrane pass occupies residues 16–36; that stretch reads FALIVVLFILLIIVGTAFVGG.

The protein belongs to the SscA family.

The protein resides in the membrane. This is an uncharacterized protein from Bacillus subtilis (strain 168).